Consider the following 418-residue polypeptide: Gamma-glutamyl phosphate reductase (418 aa).

The protein belongs to the gamma-glutamyl phosphate reductase family.

The protein localises to the cytoplasm. The catalysed reaction is L-glutamate 5-semialdehyde + phosphate + NADP(+) = L-glutamyl 5-phosphate + NADPH + H(+). It functions in the pathway amino-acid biosynthesis; L-proline biosynthesis; L-glutamate 5-semialdehyde from L-glutamate: step 2/2. Catalyzes the NADPH-dependent reduction of L-glutamate 5-phosphate into L-glutamate 5-semialdehyde and phosphate. The product spontaneously undergoes cyclization to form 1-pyrroline-5-carboxylate. This is Gamma-glutamyl phosphate reductase from Desulforapulum autotrophicum (strain ATCC 43914 / DSM 3382 / VKM B-1955 / HRM2) (Desulfobacterium autotrophicum).